Here is a 112-residue protein sequence, read N- to C-terminus: Protein Churchill (112 aa).

Zn(2+) is bound by residues Cys2, Cys5, Cys30, Cys33, His59, Cys61, Cys64, His66, His71, Cys88, and Cys91.

Belongs to the Churchill family.

Transcriptional activator that mediates FGF signaling during neural development. Plays a role in the regulation of cell movement. Does not bind DNA by itself. The chain is Protein Churchill (Churc1) from Mus musculus (Mouse).